The primary structure comprises 490 residues: Muscarinic acetylcholine receptor M4 (490 aa).

The Extracellular portion of the chain corresponds to 1–42 (MHNLSAQPWQAKMANLTYDNVTLSNRSEVAIQPPTNYKTVEL). N-linked (GlcNAc...) asparagine glycans are attached at residues N3, N15, N20, and N25. Residues 43 to 64 (VFIATVTGSLSLVTVVGNILVM) traverse the membrane as a helical segment. The Cytoplasmic portion of the chain corresponds to 65-78 (LSIKVNRQLQTVNN). A helical transmembrane segment spans residues 79–99 (YFLFSLACADLIIGVFSMNLY). The Extracellular portion of the chain corresponds to 100 to 116 (TVYIIKGYWPLGAVVCD). An intrachain disulfide couples C115 to C195. A helical transmembrane segment spans residues 117–138 (LWLALDYVVSNASVMNLLIISF). The Cytoplasmic segment spans residues 139-158 (DRYFCVTKPLTYPARRTTKM). Residues 159–181 (AGLMIAAAWILSFILWAPAILFW) traverse the membrane as a helical segment. Topologically, residues 182–203 (QFIVGKRTVHERECYIQFLSNP) are extracellular. The helical transmembrane segment at 204–226 (AVTFGTAIAAFYLPVVIMTVLYI) threads the bilayer. The Cytoplasmic portion of the chain corresponds to 227–412 (HISLASRSRV…AAREKKVTRT (186 aa)). The span at 236–250 (VRRHKPESRKERKGK) shows a compositional bias: basic residues. The interval 236 to 343 (VRRHKPESRK…HPRVNPTSKW (108 aa)) is disordered. The span at 270–285 (RAVEVKEEVRNGKVDD) shows a compositional bias: basic and acidic residues. Composition is skewed to polar residues over residues 287 to 296 (PSAQTEATGQ) and 304 to 314 (NESSTVSMTQT). Residues 413–433 (IFAILLAFILTWTPYNVMVLI) traverse the membrane as a helical segment. Residues 434–447 (NTFCETCVPETVWS) lie on the Extracellular side of the membrane. Residues 448–467 (IGYWLCYVNSTINPACYALC) traverse the membrane as a helical segment. Residues 468 to 490 (NATFKKTFKHLLMCQYRNIGTAR) are Cytoplasmic-facing.

This sequence belongs to the G-protein coupled receptor 1 family. Muscarinic acetylcholine receptor subfamily. CHRM4 sub-subfamily. As to expression, expressed in heart and brain.

The protein localises to the cell membrane. Its subcellular location is the postsynaptic cell membrane. Functionally, the muscarinic acetylcholine receptor mediates various cellular responses, including inhibition of adenylate cyclase, breakdown of phosphoinositides and modulation of potassium channels through the action of G proteins. Primary transducing effect is inhibition of adenylate cyclase. May couple to multiple functional responses in cell lines. This is Muscarinic acetylcholine receptor M4 (CHRM4) from Gallus gallus (Chicken).